The sequence spans 1299 residues: DNA-directed RNA polymerase subunit beta' (1299 aa).

Residues C60, C62, C75, and C78 each coordinate Zn(2+). The interval 385 to 405 is disordered; the sequence is GRRGRPVTGPGNRPLKSLSDM. D535, D537, and D539 together coordinate Mg(2+). Zn(2+)-binding residues include C886, C962, C969, and C972.

The protein belongs to the RNA polymerase beta' chain family. The RNAP catalytic core consists of 2 alpha, 1 beta, 1 beta' and 1 omega subunit. When a sigma factor is associated with the core the holoenzyme is formed, which can initiate transcription. The cofactor is Mg(2+). It depends on Zn(2+) as a cofactor.

It catalyses the reaction RNA(n) + a ribonucleoside 5'-triphosphate = RNA(n+1) + diphosphate. DNA-dependent RNA polymerase catalyzes the transcription of DNA into RNA using the four ribonucleoside triphosphates as substrates. The polypeptide is DNA-directed RNA polymerase subunit beta' (Streptomyces avermitilis (strain ATCC 31267 / DSM 46492 / JCM 5070 / NBRC 14893 / NCIMB 12804 / NRRL 8165 / MA-4680)).